The following is a 400-amino-acid chain: Enoyl-[acyl-carrier-protein] reductase [NADH] (400 aa).

Residues 48-53 (GSSSGY), 74-75 (FE), 111-112 (DA), and 139-140 (LA) contribute to the NAD(+) site. Tyrosine 225 lines the substrate pocket. Tyrosine 235 acts as the Proton donor in catalysis. NAD(+)-binding positions include lysine 244 and 273 to 275 (VVT).

This sequence belongs to the TER reductase family. Monomer.

The enzyme catalyses a 2,3-saturated acyl-[ACP] + NAD(+) = a (2E)-enoyl-[ACP] + NADH + H(+). Its pathway is lipid metabolism; fatty acid biosynthesis. Its function is as follows. Involved in the final reduction of the elongation cycle of fatty acid synthesis (FAS II). Catalyzes the reduction of a carbon-carbon double bond in an enoyl moiety that is covalently linked to an acyl carrier protein (ACP). The chain is Enoyl-[acyl-carrier-protein] reductase [NADH] from Shewanella oneidensis (strain ATCC 700550 / JCM 31522 / CIP 106686 / LMG 19005 / NCIMB 14063 / MR-1).